The following is a 222-amino-acid chain: MADS-box transcription factor 26 (222 aa).

The 61-residue stretch at 1-61 folds into the MADS-box domain; that stretch reads MARGKVQLRR…GKLYDLATTG (61 aa). A K-box domain is found at 85–176; that stretch reads RMDPKQEAMV…QEKIVEQNGL (92 aa).

The protein resides in the nucleus. Functionally, probable transcription factor. This chain is MADS-box transcription factor 26 (MADS26), found in Oryza sativa subsp. indica (Rice).